Reading from the N-terminus, the 464-residue chain is 3-isopropylmalate dehydratase large subunit (464 aa).

3 residues coordinate [4Fe-4S] cluster: cysteine 337, cysteine 397, and cysteine 400.

This sequence belongs to the aconitase/IPM isomerase family. LeuC type 1 subfamily. In terms of assembly, heterodimer of LeuC and LeuD. [4Fe-4S] cluster is required as a cofactor.

It carries out the reaction (2R,3S)-3-isopropylmalate = (2S)-2-isopropylmalate. Its pathway is amino-acid biosynthesis; L-leucine biosynthesis; L-leucine from 3-methyl-2-oxobutanoate: step 2/4. Functionally, catalyzes the isomerization between 2-isopropylmalate and 3-isopropylmalate, via the formation of 2-isopropylmaleate. In Bacillus mycoides (strain KBAB4) (Bacillus weihenstephanensis), this protein is 3-isopropylmalate dehydratase large subunit.